We begin with the raw amino-acid sequence, 138 residues long: Small ribosomal subunit protein uS9 (138 aa).

Over residues 100 to 118 the composition is skewed to basic and acidic residues; that stretch reads PENRPPLKTEGYLTRDPRA. A disordered region spans residues 100-138; that stretch reads PENRPPLKTEGYLTRDPRAKERKKYGLHKARKAPQYSKR. Basic residues predominate over residues 119-138; it reads KERKKYGLHKARKAPQYSKR.

Belongs to the universal ribosomal protein uS9 family.

The protein is Small ribosomal subunit protein uS9 of Trichormus variabilis (strain ATCC 29413 / PCC 7937) (Anabaena variabilis).